The chain runs to 815 residues: Ferripyoverdine receptor (815 aa).

The signal sequence occupies residues 1-43 (MPAPHGLSPLSKAFLMRRAFQRRILPHSLAMALSLPLAGYVQA). The 111-residue stretch at 161–271 (TPRETPQSIT…LGATINLIRK (111 aa)) folds into the TBDR plug domain. Residues 276–815 (EFKGHVELGA…NLMFSTRWDF (540 aa)) enclose the TBDR beta-barrel domain. Positions 798-815 (SASYGDPRNLMFSTRWDF) match the TonB C-terminal box motif.

The protein belongs to the TonB-dependent receptor family.

It is found in the cell outer membrane. Receptor for the siderophore ferripyoverdine. The sequence is that of Ferripyoverdine receptor (fpvA) from Pseudomonas aeruginosa (strain ATCC 15692 / DSM 22644 / CIP 104116 / JCM 14847 / LMG 12228 / 1C / PRS 101 / PAO1).